Consider the following 131-residue polypeptide: L-ectoine synthase (131 aa).

Belongs to the ectoine synthase family.

The catalysed reaction is (2S)-4-acetamido-2-aminobutanoate = L-ectoine + H2O. The protein operates within amine and polyamine biosynthesis; ectoine biosynthesis; L-ectoine from L-aspartate 4-semialdehyde: step 3/3. In terms of biological role, catalyzes the circularization of gamma-N-acetyl-alpha,gamma-diaminobutyric acid (ADABA) to ectoine (1,4,5,6-tetrahydro-2-methyl-4-pyrimidine carboxylic acid), which is an excellent osmoprotectant. This chain is L-ectoine synthase, found in Nocardia farcinica (strain IFM 10152).